The primary structure comprises 476 residues: Hyaluronidase-2 (476 aa).

A signal peptide spans 1–20; that stretch reads MWTGLGPAVTLALVLVVAWA. 2 disulfide bridges follow: Cys-47/Cys-343 and Cys-214/Cys-230. N-linked (GlcNAc...) asparagine glycans are attached at residues Asn-77 and Asn-106. The active-site Proton donor is the Glu-138. Asn-340 and Asn-360 each carry an N-linked (GlcNAc...) asparagine glycan. Residues 364–442 enclose the EGF-like domain; that stretch reads AAQYCSWAQC…YLGWGGEQCQ (79 aa). Disulfide bonds link Cys-368–Cys-379, Cys-373–Cys-430, and Cys-432–Cys-441. Gly-451 carries GPI-anchor amidated glycine lipidation. Residues 452–476 constitute a propeptide, removed in mature form; it reads ASGAWAGSHLTGLLAVAVLAFTWTS.

The protein belongs to the glycosyl hydrolase 56 family. Interacts with MST1R. As to quaternary structure, (Microbial infection) Interacts with Jaagsiekte sheep retrovirus (JSRV) envelope proteins.

The protein localises to the cell membrane. It catalyses the reaction Random hydrolysis of (1-&gt;4)-linkages between N-acetyl-beta-D-glucosamine and D-glucuronate residues in hyaluronate.. Its function is as follows. Catalyzes hyaluronan degradation into small fragments that are endocytosed and degraded in lysosomes by HYAL1 and exoglycosidases. Essential for the breakdown of extracellular matrix hyaluronan. This chain is Hyaluronidase-2 (HYAL2), found in Ovis aries (Sheep).